We begin with the raw amino-acid sequence, 509 residues long: ATP synthase subunit alpha (509 aa).

An ATP-binding site is contributed by 169–176 (GDRQTGKT).

This sequence belongs to the ATPase alpha/beta chains family. In terms of assembly, F-type ATPases have 2 components, CF(1) - the catalytic core - and CF(0) - the membrane proton channel. CF(1) has five subunits: alpha(3), beta(3), gamma(1), delta(1), epsilon(1). CF(0) has three main subunits: a(1), b(2) and c(9-12). The alpha and beta chains form an alternating ring which encloses part of the gamma chain. CF(1) is attached to CF(0) by a central stalk formed by the gamma and epsilon chains, while a peripheral stalk is formed by the delta and b chains.

It is found in the cell inner membrane. It catalyses the reaction ATP + H2O + 4 H(+)(in) = ADP + phosphate + 5 H(+)(out). Produces ATP from ADP in the presence of a proton gradient across the membrane. The alpha chain is a regulatory subunit. The sequence is that of ATP synthase subunit alpha from Rhizobium leguminosarum bv. trifolii (strain WSM2304).